A 950-amino-acid polypeptide reads, in one-letter code: MSLPSPLIPVAELAMQNAQQSGYLEHWPQALITQFQFISGLSKFVVETVQRDAQLAESLPEMLAQESRQEAYRTRLAEQLQACHDEVAGHRVLRQFRNREMVYIAWKDFTQAWSLEESLSHLSELAEAMIFETYQWQYQLCCKEWGTPTNAQGEAQPMLIIGMGKLGGGELNFSSDIDLIFTYPENGETQGARRSIANAQFFTRLGQRLIKALDQQTFDGFCYRVDMRLRPFGESGPLVMSYAALEDYYQEQGRDWERYAMIKARVMGREMYPEYQELRQMLRPFVFRRYIDFSAIQSLRRMKSMISSEVRRRGLSNNIKLGAGGIREIEFIAQVFQLIRGGREPALRQRGLLVTLEAIKQLQLLEEAQVCHLVEAYKYLRRLENLLQAMADKQTQTLPDNELEQLALAVAMGYSQWQALQNDVQQHMAKVHAVFVTLIGDEEDEVSPVERHFNELWDMAHNPEVIEQILQNDLACQNAATMSEQIIQFKADLAKKTLGPRGREVLNRLMPKLFSAIFADADAQFGLPRVLHLLHNIATRTTYLELLDEHPAALTQLVRLCTASPMISEQLARYPILLDELIDPQQLYNPIALDAYRTELRDFLARIPEDDVEQQMDALRQFKQICSLRIAAADIAGVLPVMKVSDHLTYLAEAIVEAVVHQAWQQVAEKYGEPTHLKDREGKGFAVVGYGKVGGWELGYNSDLDVVFLHDCPVNVYTDGKKEIDGRQFYLRLAQRIIHIFSTRTASGILYEVDTRLRPSGASGLLVCPVDAFEEYQHNDAWTWEHQALVRARMIYGDEHLASEFHRVRHQVLAKPREQAKLQKEVADMRAKMRDHLGGKKSDRFMLKQDQGGITDIEFLAQYLVLNYSAEKPKLTRWCDNVRIFETLIAQGVMEEAQAMLLTQAYTTMRDEIHRRNLLNLDADVALDKFVALRQGVSKAWQEWLESSTI.

Residues 1-443 are adenylyl removase; the sequence is MSLPSPLIPV…VFVTLIGDEE (443 aa). Positions 450–950 are adenylyl transferase; the sequence is ERHFNELWDM…WQEWLESSTI (501 aa).

Belongs to the GlnE family. Requires Mg(2+) as cofactor.

The enzyme catalyses [glutamine synthetase]-O(4)-(5'-adenylyl)-L-tyrosine + phosphate = [glutamine synthetase]-L-tyrosine + ADP. It carries out the reaction [glutamine synthetase]-L-tyrosine + ATP = [glutamine synthetase]-O(4)-(5'-adenylyl)-L-tyrosine + diphosphate. In terms of biological role, involved in the regulation of glutamine synthetase GlnA, a key enzyme in the process to assimilate ammonia. When cellular nitrogen levels are high, the C-terminal adenylyl transferase (AT) inactivates GlnA by covalent transfer of an adenylyl group from ATP to specific tyrosine residue of GlnA, thus reducing its activity. Conversely, when nitrogen levels are low, the N-terminal adenylyl removase (AR) activates GlnA by removing the adenylyl group by phosphorolysis, increasing its activity. The regulatory region of GlnE binds the signal transduction protein PII (GlnB) which indicates the nitrogen status of the cell. The polypeptide is Bifunctional glutamine synthetase adenylyltransferase/adenylyl-removing enzyme (Vibrio vulnificus (strain CMCP6)).